The sequence spans 62 residues: Photosystem II reaction center protein Z (62 aa).

Helical transmembrane passes span 8–28 (ALLA…VVFA) and 41–61 (FSGL…NSFV).

Belongs to the PsbZ family. In terms of assembly, PSII is composed of 1 copy each of membrane proteins PsbA, PsbB, PsbC, PsbD, PsbE, PsbF, PsbH, PsbI, PsbJ, PsbK, PsbL, PsbM, PsbT, PsbY, PsbZ, Psb30/Ycf12, at least 3 peripheral proteins of the oxygen-evolving complex and a large number of cofactors. It forms dimeric complexes.

Its subcellular location is the plastid. It is found in the chloroplast thylakoid membrane. In terms of biological role, controls the interaction of photosystem II (PSII) cores with the light-harvesting antenna, aiding in the dissipation of excitation energy within PSII. PSII is a light-driven water plastoquinone oxidoreductase, using light energy to abstract electrons from H(2)O, generating a proton gradient subsequently used for ATP formation. The protein is Photosystem II reaction center protein Z of Chlamydomonas reinhardtii (Chlamydomonas smithii).